A 682-amino-acid polypeptide reads, in one-letter code: Acyl-CoA synthetase short-chain family member 3, mitochondrial (682 aa).

The transit peptide at methionine 1–glycine 29 directs the protein to the mitochondrion. Glutamate 222 to arginine 225 provides a ligand contact to CoA. ATP is bound by residues glycine 420–arginine 422 and aspartate 441–threonine 446. Lysine 513 bears the N6-succinyllysine mark. Lysine 519 is modified (N6-acetyllysine). 3 residues coordinate ATP: aspartate 534, arginine 549, and arginine 560. Arginine 619 is a CoA binding site.

It belongs to the ATP-dependent AMP-binding enzyme family.

It is found in the mitochondrion matrix. The enzyme catalyses acetate + ATP + CoA = acetyl-CoA + AMP + diphosphate. It catalyses the reaction propanoate + ATP + CoA = propanoyl-CoA + AMP + diphosphate. The catalysed reaction is butanoate + ATP + CoA = butanoyl-CoA + AMP + diphosphate. In terms of biological role, catalyzes the synthesis of acetyl-CoA from short-chain fatty acids. Propionate is the preferred substrate but can also utilize acetate and butyrate with a much lower affinity. The sequence is that of Acyl-CoA synthetase short-chain family member 3, mitochondrial (Acss3) from Mus musculus (Mouse).